The sequence spans 510 residues: 2,3-bisphosphoglycerate-independent phosphoglycerate mutase (510 aa).

Residues D13 and S63 each coordinate Mn(2+). The Phosphoserine intermediate role is filled by S63. Substrate is bound by residues H124, 154–155 (RD), R186, R192, 262–265 (RADR), and K334. Residues D401, H405, D442, H443, and H461 each coordinate Mn(2+).

Belongs to the BPG-independent phosphoglycerate mutase family. In terms of assembly, monomer. It depends on Mn(2+) as a cofactor.

The enzyme catalyses (2R)-2-phosphoglycerate = (2R)-3-phosphoglycerate. Its pathway is carbohydrate degradation; glycolysis; pyruvate from D-glyceraldehyde 3-phosphate: step 3/5. Its function is as follows. Catalyzes the interconversion of 2-phosphoglycerate and 3-phosphoglycerate. This chain is 2,3-bisphosphoglycerate-independent phosphoglycerate mutase, found in Aliivibrio fischeri (strain MJ11) (Vibrio fischeri).